A 118-amino-acid polypeptide reads, in one-letter code: Ly-6/neurotoxin-like protein 1 (118 aa).

A signal peptide spans Met-1–Ala-22. A UPAR/Ly6 domain is found at Leu-23–Ala-107. 5 disulfides stabilise this stretch: Cys-25–Cys-48, Cys-28–Cys-35, Cys-41–Cys-66, Cys-70–Cys-87, and Cys-88–Cys-93. A lipid anchor (GPI-anchor amidated serine) is attached at Ser-95. Positions Ala-96–Leu-118 are cleaved as a propeptide — removed in mature form.

As to quaternary structure, interacts with nAChRs containing alpha-4:beta-2 (CHRNA4:CHRNB2) and alpha-7 (CHRNA7) subunits. Interacts with CHRNA4 probably in the endoplasmic reticulum prior to nAChR pentameric assembly. Interacts with KCNA2/Potassium voltage-gated channel subfamily A member 2. As to expression, expressed in lung predominantly in airway epithelial cells, submucous glands, and smooth muscle cells, in endothelial and smooth muscle cells in vessel walls and in alveolar type II cells (at protein level). Also expressed in brain.

It localises to the cell membrane. The protein localises to the cell projection. Its subcellular location is the dendrite. It is found in the endoplasmic reticulum. Its function is as follows. Acts in different tissues through interaction to nicotinic acetylcholine receptors (nAChRs). The proposed role as modulator of nAChR activity seems to be dependent on the nAChR subtype and stoichiometry, and to involve an effect on nAChR trafficking and its cell surface expression, and on single channel properties of the nAChR inserted in the plasma membrane. Modulates functional properties of nicotinic acetylcholine receptors (nAChRs) to prevent excessive excitation, and hence neurodegeneration. Enhances desensitization by increasing both the rate and extent of desensitization of alpha-4:beta-2-containing nAChRs and slowing recovery from desensitization. Promotes large amplitude ACh-evoked currents through alpha-4:beta-2 nAChRs. Is involved in regulation of the nAChR pentameric assembly in the endoplasmic reticulum. Shifts stoichiometry from high sensitivity alpha-4(2):beta-2(3) to low sensitivity alpha-4(3):beta-2(2) nAChR. In vitro modulates alpha-3:beta-4-containing nAChRs. Reduces cell surface expression of (alpha-3:beta-4)(2):beta-4 and (alpha-3:beta-4)(2):alpha-5 nAChRs suggesting an interaction with nAChR alpha-3(-):(+)beta-4 subunit interfaces and an allosteric mode. Corresponding single channel effects characterized by decreased unitary conductance, altered burst proportions and enhanced desensitization/inactivation seem to depend on nAChR alpha:alpha subunit interfaces and are greater in (alpha-3:beta-2)(2):alpha-3 when compared to (alpha-3:beta-2)(2):alpha-5 nAChRs. Prevents plasticity in the primary visual cortex late in life. In Macaca mulatta (Rhesus macaque), this protein is Ly-6/neurotoxin-like protein 1.